Consider the following 348-residue polypeptide: UDP-glucose 4-epimerase (348 aa).

NAD(+)-binding positions include 12–14 (GYI), 33–37 (DNFHN), 66–67 (DI), Phe88, and Lys92. 132–134 (SAT) serves as a coordination point for substrate. Tyr157 serves as the catalytic Proton acceptor. Positions 161 and 185 each coordinate NAD(+). Substrate contacts are provided by residues 185-187 (YFN), 206-208 (NNL), 224-226 (NVF), Arg239, and 300-303 (REGD).

Belongs to the NAD(P)-dependent epimerase/dehydratase family. In terms of assembly, homodimer. It depends on NAD(+) as a cofactor.

The catalysed reaction is UDP-alpha-D-glucose = UDP-alpha-D-galactose. It carries out the reaction UDP-N-acetyl-alpha-D-glucosamine = UDP-N-acetyl-alpha-D-galactosamine. Its pathway is carbohydrate metabolism; galactose metabolism. Catalyzes two distinct but analogous reactions: the reversible epimerization of UDP-glucose to UDP-galactose and the reversible epimerization of UDP-N-acetylglucosamine to UDP-N-acetylgalactosamine. The reaction with UDP-Gal plays a critical role in the Leloir pathway of galactose catabolism in which galactose is converted to the glycolytic intermediate glucose 6-phosphate. It contributes to the catabolism of dietary galactose and enables the endogenous biosynthesis of both UDP-Gal and UDP-GalNAc when exogenous sources are limited. Both UDP-sugar interconversions are important in the synthesis of glycoproteins and glycolipids. This Homo sapiens (Human) protein is UDP-glucose 4-epimerase.